The chain runs to 347 residues: Extracellular exo-alpha-(1-&gt;5)-L-arabinofuranosidase ArbA (347 aa).

A signal peptide spans 1-31 (MPTHHPITRQHWHHSWLSALALLCASLACGA). Asp-35 contacts substrate. Catalysis depends on Asp-38, which acts as the Proton acceptor. Substrate contacts are provided by residues 90–92 (DGH), 115–116 (GK), Asn-155, Ser-175, and Glu-221. The Proton donor role is filled by Glu-221. Position 291 (His-291) interacts with Ca(2+). Gln-316 lines the substrate pocket.

Belongs to the glycosyl hydrolase 43 family. As to quaternary structure, homodimer.

Its subcellular location is the secreted. It carries out the reaction Hydrolysis of terminal non-reducing alpha-L-arabinofuranoside residues in alpha-L-arabinosides.. It participates in glycan metabolism; L-arabinan degradation. Functionally, involved in the degradation of arabinan and is a key enzyme in the complete degradation of the plant cell wall. Catalyzes the cleavage of the terminal alpha-(1-&gt;5)-arabinofuranosyl bonds of linear arabinan and carboxymethylarabinan to produce almost exclusively arabinotriose. This chain is Extracellular exo-alpha-(1-&gt;5)-L-arabinofuranosidase ArbA (arbA), found in Cellvibrio japonicus (strain Ueda107) (Pseudomonas fluorescens subsp. cellulosa).